The primary structure comprises 179 residues: Ribosome-recycling factor (179 aa).

This sequence belongs to the RRF family.

It localises to the cytoplasm. Functionally, responsible for the release of ribosomes from messenger RNA at the termination of protein biosynthesis. May increase the efficiency of translation by recycling ribosomes from one round of translation to another. In Chlamydia trachomatis serovar D (strain ATCC VR-885 / DSM 19411 / UW-3/Cx), this protein is Ribosome-recycling factor.